A 77-amino-acid chain; its full sequence is Major outer membrane lipoprotein Lpp (77 aa).

The N-terminal stretch at 1–19 is a signal peptide; it reads MNRTKLVLGAVILGSHSAG. Cysteine 20 carries the N-palmitoyl cysteine lipid modification. Cysteine 20 carries the S-diacylglycerol cysteine lipid modification. 2 consecutive repeats follow at residues 23 to 33 and 37 to 47; these read NAKIDQLSSDV and NAKVDQLSNDV. Residues 26-74 adopt a coiled-coil conformation; sequence IDQLSSDVQTLNAKVDQLSNDVNAMRSDVQAAKDDAARANQRLDNQAHA. Residues 56-77 form a disordered region; that stretch reads AAKDDAARANQRLDNQAHAYKK. Lysine 77 is subject to N6-murein peptidoglycan lysine.

Belongs to the Lpp family. As to quaternary structure, homotrimer.

The protein resides in the cell outer membrane. Its subcellular location is the secreted. It localises to the cell wall. In terms of biological role, a highly abundant outer membrane lipoprotein that controls the distance between the inner and outer membranes. The only protein known to be covalently linked to the peptidoglycan network (PGN). Also non-covalently binds the PGN. The link between the cell outer membrane and PGN contributes to maintenance of the structural and functional integrity of the cell envelope, and maintains the correct distance between the PGN and the outer membrane. This is Major outer membrane lipoprotein Lpp from Serratia marcescens.